Reading from the N-terminus, the 214-residue chain is MIKVLVVDDHDLVRTGITRMLADIEGLQVVGQADCGEDCLKLARELKPDVVLMDVKMPGIGGLEATRKLLRSQPDIKVVVVTVCEEDPFPTRLMQAGAAGYMTKGAGLEEMVQAIRQVFAGQRYISPQIAQQLALKSFQPQQHDSPFDSLSEREIQIALMIANCHKVQSISDKLCLSPKTVNTYRYRIFEKLSITSDVELALLAVRHGMVDAAS.

The Response regulatory domain occupies 3–119 (KVLVVDDHDL…EMVQAIRQVF (117 aa)). Aspartate 54 carries the post-translational modification 4-aspartylphosphate. The HTH luxR-type domain maps to 143–208 (HDSPFDSLSE…ELALLAVRHG (66 aa)). Residues 167–186 (VQSISDKLCLSPKTVNTYRY) constitute a DNA-binding region (H-T-H motif).

Positively controls the production of the autoinducer N-butyryl-homoserine lactone and the formation of the virulence factors pyocyanine, cyanide, and lipase. This chain is Response regulator GacA (gacA), found in Pseudomonas aeruginosa (strain ATCC 15692 / DSM 22644 / CIP 104116 / JCM 14847 / LMG 12228 / 1C / PRS 101 / PAO1).